The chain runs to 1287 residues: DNA-directed RNA polymerase subunit beta (1287 aa).

Belongs to the RNA polymerase beta chain family. As to quaternary structure, the RNAP catalytic core consists of 2 alpha, 1 beta, 1 beta' and 1 omega subunit. When a sigma factor is associated with the core the holoenzyme is formed, which can initiate transcription.

The enzyme catalyses RNA(n) + a ribonucleoside 5'-triphosphate = RNA(n+1) + diphosphate. DNA-dependent RNA polymerase catalyzes the transcription of DNA into RNA using the four ribonucleoside triphosphates as substrates. The polypeptide is DNA-directed RNA polymerase subunit beta (Mycoplasma capricolum subsp. capricolum (strain California kid / ATCC 27343 / NCTC 10154)).